A 511-amino-acid polypeptide reads, in one-letter code: 2,3-bisphosphoglycerate-independent phosphoglycerate mutase (511 aa).

Positions 18 and 68 each coordinate Mn(2+). The Phosphoserine intermediate role is filled by serine 68. Substrate contacts are provided by residues histidine 129, 159-160 (RD), arginine 191, lysine 197, 261-264 (RSDR), and lysine 329. The Mn(2+) site is built by aspartate 396, histidine 400, aspartate 437, histidine 438, and histidine 459. The tract at residues 442-464 (ERMTKQAPDGSVRPYGGHTTNPV) is disordered.

This sequence belongs to the BPG-independent phosphoglycerate mutase family. In terms of assembly, monomer. It depends on Mn(2+) as a cofactor.

The enzyme catalyses (2R)-2-phosphoglycerate = (2R)-3-phosphoglycerate. The protein operates within carbohydrate degradation; glycolysis; pyruvate from D-glyceraldehyde 3-phosphate: step 3/5. Functionally, catalyzes the interconversion of 2-phosphoglycerate and 3-phosphoglycerate. The protein is 2,3-bisphosphoglycerate-independent phosphoglycerate mutase of Streptomyces coelicolor (strain ATCC BAA-471 / A3(2) / M145).